Consider the following 292-residue polypeptide: Putative rRNA 2'-O-methyltransferase fibrillarin 3 (292 aa).

Residues 1–58 form a disordered region; it reads MKPPQRGRGGGVRGGRGLARGGEGSAVRGSGRGGESGRGRGPGRVKSESDGGIKGGSK. Residues 7 to 42 are compositionally biased toward gly residues; that stretch reads GRGGGVRGGRGLARGGEGSAVRGSGRGGESGRGRGP. Residues 146–147, 165–166, 190–191, and 210–213 contribute to the S-adenosyl-L-methionine site; these read YT, EH, DA, and DVNH.

The protein belongs to the methyltransferase superfamily. Fibrillarin family. In terms of assembly, component of box C/D small nucleolar ribonucleoprotein (snoRNP) particles. Not detectable by RT-PCR.

The protein resides in the nucleus. Its subcellular location is the nucleolus. The enzyme catalyses L-glutaminyl-[histone H2A] + S-adenosyl-L-methionine = N(5)-methyl-L-glutaminyl-[histone H2A] + S-adenosyl-L-homocysteine + H(+). In terms of biological role, S-adenosyl-L-methionine-dependent methyltransferase that has the ability to methylate both RNAs and proteins. Involved in pre-rRNA processing. Utilizes the methyl donor S-adenosyl-L-methionine to catalyze the site-specific 2'-hydroxyl methylation of ribose moieties in pre-ribosomal RNA. Site specificity is provided by a guide RNA that base pairs with the substrate. Methylation occurs at a characteristic distance from the sequence involved in base pairing with the guide RNA. Also acts as a protein methyltransferase by mediating methylation of 'Gln-105' of histone H2A (H2AQ105me), a modification that impairs binding of the FACT complex and is specifically present at 35S ribosomal DNA locus. This chain is Putative rRNA 2'-O-methyltransferase fibrillarin 3 (FIB3), found in Arabidopsis thaliana (Mouse-ear cress).